The primary structure comprises 292 residues: ATP synthase gamma chain (292 aa).

The protein belongs to the ATPase gamma chain family. F-type ATPases have 2 components, CF(1) - the catalytic core - and CF(0) - the membrane proton channel. CF(1) has five subunits: alpha(3), beta(3), gamma(1), delta(1), epsilon(1). CF(0) has three main subunits: a, b and c.

It localises to the cell membrane. Functionally, produces ATP from ADP in the presence of a proton gradient across the membrane. The gamma chain is believed to be important in regulating ATPase activity and the flow of protons through the CF(0) complex. This Caldicellulosiruptor saccharolyticus (strain ATCC 43494 / DSM 8903 / Tp8T 6331) protein is ATP synthase gamma chain.